A 637-amino-acid chain; its full sequence is Glutamate--cysteine ligase catalytic subunit (637 aa).

M1 is modified (N-acetylmethionine). Phosphoserine occurs at positions 5 and 8.

The protein belongs to the glutamate--cysteine ligase type 3 family. In terms of assembly, heterodimer of a catalytic heavy chain and a regulatory light chain.

It catalyses the reaction L-cysteine + L-glutamate + ATP = gamma-L-glutamyl-L-cysteine + ADP + phosphate + H(+). The enzyme catalyses (2S)-2-aminobutanoate + L-glutamate + ATP = gamma-L-glutamyl-(2S)-2-aminobutanoate + ADP + phosphate + H(+). It functions in the pathway sulfur metabolism; glutathione biosynthesis; glutathione from L-cysteine and L-glutamate: step 1/2. With respect to regulation, feedback inhibition by glutathione. Its function is as follows. Catalyzes the ATP-dependent ligation of L-glutamate and L-cysteine and participates in the first and rate-limiting step in glutathione biosynthesis. The protein is Glutamate--cysteine ligase catalytic subunit of Mus musculus (Mouse).